Reading from the N-terminus, the 115-residue chain is MNSGVSLCVLMAVLAAGALTQPVPPAEPAGSGLQRAEEAPRRQLRAVQRTDGESRAHLGALLARYIQQARKAPSGRMSIIKNLQNLDPSHRISDRDYMGWMDFGRRSAEEYEYPS.

The signal sequence occupies residues 1-20 (MNSGVSLCVLMAVLAAGALT). The propeptide occupies 21 to 44 (QPVPPAEPAGSGLQRAEEAPRRQL). The interval 21-51 (QPVPPAEPAGSGLQRAEEAPRRQLRAVQRTD) is disordered. A glycan (O-linked (Xyl...) (chondroitin sulfate) serine) is linked at serine 31. Position 97 is a sulfotyrosine (tyrosine 97). Phenylalanine 103 is subject to Phenylalanine amide. Positions 107 to 115 (SAEEYEYPS) are excised as a propeptide. Residues tyrosine 111 and tyrosine 113 each carry the sulfotyrosine modification.

Belongs to the gastrin/cholecystokinin family. Binds to CCK-A receptors in the pancreas and CCK-B receptors in the brain. The precursor is cleaved by proteases to produce a number of active cholecystokinins. In terms of processing, the precursor is cleaved by ACE, which removes the Gly-Arg-Arg peptide at the C-terminus, leading to mature hormone.

It is found in the secreted. Its function is as follows. This peptide hormone induces gall bladder contraction and the release of pancreatic enzymes in the gut. Its function in the brain is not clear. Binding to CCK-A receptors stimulates amylase release from the pancreas, binding to CCK-B receptors stimulates gastric acid secretion. In Macaca fascicularis (Crab-eating macaque), this protein is Cholecystokinin (CCK).